The sequence spans 517 residues: Acetylcholine receptor subunit delta (517 aa).

Positions 1-21 (MEGPVLTLGLLAALAVCGSWG) are cleaved as a signal peptide. At 22–245 (LNEEERLIRH…ITFYLIIRRK (224 aa)) the chain is on the extracellular side. Residues Asn-97 and Asn-164 are each glycosylated (N-linked (GlcNAc...) asparagine). Residues Cys-151 and Cys-165 are joined by a disulfide bond. 3 helical membrane passes run 246–270 (PLFYIINILVPCVLISFMVNLVFYL), 278–299 (TSVAISVLLAQSVFLLLISKRL), and 312–333 (FLLFGMVLVTMVVVICVIVLNI). Topologically, residues 334 to 471 (HFRTPSTHVL…WNRVARTVDR (138 aa)) are cytoplasmic. Tyr-390 bears the Phosphotyrosine; by Tyr-kinases mark. Residues 472–490 (LCLFVVTPVMVVGTAWIFL) form a helical membrane-spanning segment.

Belongs to the ligand-gated ion channel (TC 1.A.9) family. Acetylcholine receptor (TC 1.A.9.1) subfamily. Delta/CHRND sub-subfamily. In terms of assembly, pentamer of two alpha chains, and one each of the beta, delta, and gamma (in immature muscle) or epsilon (in mature muscle) chains. The muscle heteropentamer composed of alpha-1, beta-1, delta, epsilon subunits interacts with the alpha-conotoxin ImII.

The protein localises to the postsynaptic cell membrane. Its subcellular location is the cell membrane. It catalyses the reaction K(+)(in) = K(+)(out). It carries out the reaction Na(+)(in) = Na(+)(out). Functionally, after binding acetylcholine, the AChR responds by an extensive change in conformation that affects all subunits and leads to opening of an ion-conducting channel across the plasma membrane. The polypeptide is Acetylcholine receptor subunit delta (Homo sapiens (Human)).